The primary structure comprises 332 residues: DNA-directed RNA polymerase subunit alpha (332 aa).

Residues 1-226 (MLIAQRPTLT…ELFGLARELN (226 aa)) form an alpha N-terminal domain (alpha-NTD) region. Residues 243 to 332 (LSSELSMPIE…GYDEDESTTI (90 aa)) form an alpha C-terminal domain (alpha-CTD) region.

The protein belongs to the RNA polymerase alpha chain family. In terms of assembly, homodimer. The RNAP catalytic core consists of 2 alpha, 1 beta, 1 beta' and 1 omega subunit. When a sigma factor is associated with the core the holoenzyme is formed, which can initiate transcription.

The enzyme catalyses RNA(n) + a ribonucleoside 5'-triphosphate = RNA(n+1) + diphosphate. Its function is as follows. DNA-dependent RNA polymerase catalyzes the transcription of DNA into RNA using the four ribonucleoside triphosphates as substrates. This chain is DNA-directed RNA polymerase subunit alpha, found in Leifsonia xyli subsp. xyli (strain CTCB07).